The primary structure comprises 389 residues: Large ribosomal subunit protein uL3 (389 aa).

The protein belongs to the universal ribosomal protein uL3 family. Component of the large ribosomal subunit. Mature ribosomes consist of a small (40S) and a large (60S) subunit. The 40S subunit contains about 32 different proteins and 1 molecule of RNA (18S). The 60S subunit contains 45 different proteins and 3 molecules of RNA (25S, 5.8S and 5S).

The protein localises to the cytoplasm. In terms of biological role, component of the ribosome, a large ribonucleoprotein complex responsible for the synthesis of proteins in the cell. The small ribosomal subunit (SSU) binds messenger RNAs (mRNAs) and translates the encoded message by selecting cognate aminoacyl-transfer RNA (tRNA) molecules. The large subunit (LSU) contains the ribosomal catalytic site termed the peptidyl transferase center (PTC), which catalyzes the formation of peptide bonds, thereby polymerizing the amino acids delivered by tRNAs into a polypeptide chain. The nascent polypeptides leave the ribosome through a tunnel in the LSU and interact with protein factors that function in enzymatic processing, targeting, and the membrane insertion of nascent chains at the exit of the ribosomal tunnel. RPL3 plays a role in coordinating processes of accommodating the aminoacyl-tRNA in the PTC. This Candida albicans (strain SC5314 / ATCC MYA-2876) (Yeast) protein is Large ribosomal subunit protein uL3.